The following is a 506-amino-acid chain: ATP synthase subunit alpha (506 aa).

ATP is bound at residue 169-176; that stretch reads GDRGTGKT.

Belongs to the ATPase alpha/beta chains family. F-type ATPases have 2 components, CF(1) - the catalytic core - and CF(0) - the membrane proton channel. CF(1) has five subunits: alpha(3), beta(3), gamma(1), delta(1), epsilon(1). CF(0) has three main subunits: a(1), b(2) and c(9-12). The alpha and beta chains form an alternating ring which encloses part of the gamma chain. CF(1) is attached to CF(0) by a central stalk formed by the gamma and epsilon chains, while a peripheral stalk is formed by the delta and b chains.

It localises to the cell membrane. It carries out the reaction ATP + H2O + 4 H(+)(in) = ADP + phosphate + 5 H(+)(out). Its function is as follows. Produces ATP from ADP in the presence of a proton gradient across the membrane. The alpha chain is a regulatory subunit. The sequence is that of ATP synthase subunit alpha from Symbiobacterium thermophilum (strain DSM 24528 / JCM 14929 / IAM 14863 / T).